We begin with the raw amino-acid sequence, 279 residues long: Thymidylate synthase (279 aa).

133–134 is a binding site for dUMP; the sequence is RR. Catalysis depends on Cys-154, which acts as the Nucleophile. DUMP is bound by residues 178 to 181, Asn-189, and 219 to 221; these read RSND and HIY. (6R)-5,10-methylene-5,6,7,8-tetrahydrofolate is bound at residue Asp-181. Position 278 (Ala-278) interacts with (6R)-5,10-methylene-5,6,7,8-tetrahydrofolate.

The protein belongs to the thymidylate synthase family. Bacterial-type ThyA subfamily. Homodimer.

It localises to the cytoplasm. The catalysed reaction is dUMP + (6R)-5,10-methylene-5,6,7,8-tetrahydrofolate = 7,8-dihydrofolate + dTMP. Its pathway is pyrimidine metabolism; dTTP biosynthesis. Catalyzes the reductive methylation of 2'-deoxyuridine-5'-monophosphate (dUMP) to 2'-deoxythymidine-5'-monophosphate (dTMP) while utilizing 5,10-methylenetetrahydrofolate (mTHF) as the methyl donor and reductant in the reaction, yielding dihydrofolate (DHF) as a by-product. This enzymatic reaction provides an intracellular de novo source of dTMP, an essential precursor for DNA biosynthesis. In Streptococcus agalactiae serotype Ia (strain ATCC 27591 / A909 / CDC SS700), this protein is Thymidylate synthase.